A 330-amino-acid chain; its full sequence is Putative glycosyltransferase ORF330 (330 aa).

The protein belongs to the glycosyltransferase group 1 family. Glycosyltransferase 4 subfamily.

This chain is Putative glycosyltransferase ORF330, found in Acidianus filamentous virus 2 (isolate Italy/Pozzuoli) (AFV-2).